A 429-amino-acid chain; its full sequence is MDVTSTLSLGDPLEPARKATADMLRSRDHSFSLPQPFYCDQRLFEIDMQEIFHKEWLIAGMTCEIPAKGNFLTLQIGKNPVLVIRGAEGQVHAFHNVCRHRGSRLCVSEKGKVAKLVCPYHQWTYELDGRLLFAGTEMGADFDMKEYGLKPIQVKTAGGYIFISLAENPPAIDDFLATLEHYMEPYDMENAKVAVQTTIREAANWKLVIENNRECYHCNGSHPELLKTLLEWDDVTDPRASQAFKDQVAACTSAWEAEKIPYAHASFGLRNRIVRMPLLDGTVSMTMDGKQGSKKLMGRIKNPDLGSMRILHLPHSWNHCMGDHLIVFTVWPISAQETLVTTKWLVHKDAVEGVDYDVARLREVWDATNDQDRRLAEENQRGINSDAYQPGPYSKTYEFGVINFLDWYSERMLNNLGEESAHVRKVAGS.

The Rieske domain occupies 56 to 163; that stretch reads WLIAGMTCEI…VKTAGGYIFI (108 aa). [2Fe-2S] cluster-binding residues include Cys98, His100, Cys118, and His121. 2 residues coordinate Fe cation: His217 and His222.

The protein belongs to the bacterial ring-hydroxylating dioxygenase alpha subunit family. As to quaternary structure, the system is composed of an oxygenase subunit (GbcA) and a reductase subunit (GbcB). It depends on [2Fe-2S] cluster as a cofactor. Fe cation is required as a cofactor.

It carries out the reaction glycine betaine + NADH + O2 + H(+) = N,N-dimethylglycine + formaldehyde + NAD(+) + H2O. In terms of biological role, involved in degradation of glycine betaine. Part of a Rieske-type oxygenase system that catalyzes the conversion of glycine betaine (GB) to dimethylglycine (DMG). This subunit is the terminal oxygenase component of the system. In Pseudomonas aeruginosa (strain UCBPP-PA14), this protein is Glycine betaine monooxygenase oxygenase subunit.